Here is a 286-residue protein sequence, read N- to C-terminus: NADPH-dependent 7-cyano-7-deazaguanine reductase (286 aa).

92-94 (IES) is a substrate binding site. 94–95 (SK) serves as a coordination point for NADPH. Cys194 functions as the Thioimide intermediate in the catalytic mechanism. Asp201 serves as the catalytic Proton donor. Residue 233 to 234 (HE) participates in substrate binding. NADPH is bound at residue 262 to 263 (RG).

It belongs to the GTP cyclohydrolase I family. QueF type 2 subfamily. Homodimer.

Its subcellular location is the cytoplasm. The catalysed reaction is 7-aminomethyl-7-carbaguanine + 2 NADP(+) = 7-cyano-7-deazaguanine + 2 NADPH + 3 H(+). It functions in the pathway tRNA modification; tRNA-queuosine biosynthesis. In terms of biological role, catalyzes the NADPH-dependent reduction of 7-cyano-7-deazaguanine (preQ0) to 7-aminomethyl-7-deazaguanine (preQ1). In Shewanella oneidensis (strain ATCC 700550 / JCM 31522 / CIP 106686 / LMG 19005 / NCIMB 14063 / MR-1), this protein is NADPH-dependent 7-cyano-7-deazaguanine reductase.